Consider the following 496-residue polypeptide: Transcription termination factor MTERF9, chloroplastic (496 aa).

Residues 1-44 (MAGFSLYCFKNPRILFTLPSESPLFVLGSDKCSPATRRPSRKTR) constitute a chloroplast transit peptide. Disordered stretches follow at residues 57 to 90 (IINP…DDDW) and 102 to 155 (YEKK…SWRL). Residues 74 to 90 (DSDEDDDDDDDDDDDDW) are compositionally biased toward acidic residues. Residues 105–123 (KKPKSHKQTIAKKSVKKGI) are compositionally biased toward basic residues. A compositionally biased stretch (basic and acidic residues) spans 146–155 (SEKKKESWRL).

This sequence belongs to the mTERF family.

Its subcellular location is the plastid. The protein localises to the chloroplast. Its function is as follows. Transcription termination factor required for processing and steady-state levels of plastid transcripts. May play a role in response to abiotic stresses. This chain is Transcription termination factor MTERF9, chloroplastic, found in Arabidopsis thaliana (Mouse-ear cress).